The sequence spans 516 residues: MKCTVVALVLLVAVQCLVLGAGPAAAAKARRTRQGDYLNRLRGSPSSRASWESLAAVEEQTTTKAAGRPAPVAAAVEAGRKEADRVEALPGHPRGVDFAQYAGYVTVDAAAGRALFYYLAEAVGGNGDKTKPLLLWLNGGPGCSSLGYGAMEELGPFRVMSDGKTLYSNPYSWNHAANVLFLESPAGVGYSYSNTTADYGRSGDNGTAEDAYQFLDNWLERFPEYKGREFYITGESYAGHYVPQLAHAILRHASPDINLKGIMIGNAVINDWTDSKGMYDFFWTHALISDETADGISKNCNFTAYGAGVASNALCDAASDEVGESLADIDIYNIYAPNCQSEKLVTPPIAPSIDNFDPCTDYYVEAYLNRPDVQKALHANVTRLDHPWSACSDVLTRWVDSAKTVLPIIQELMKNSIRVWVYSGDTDGRVPVTSSRLSVNQLQLPVAAKWRPWFSSTKGAGEVGGYIVQYKGDLSLVTVRGAGHEVPSYQPRRALVLVQNFLAGKALPDCKECEQD.

Positions methionine 1 to glycine 20 are cleaved as a signal peptide. A propeptide spanning residues alanine 21–glutamate 77 is cleaved from the precursor. 3 disulfide bridges follow: cysteine 143-cysteine 391, cysteine 300-cysteine 315, and cysteine 339-cysteine 359. N-linked (GlcNAc...) asparagine glycans are attached at residues asparagine 194 and asparagine 205. The active site involves serine 236. N-linked (GlcNAc...) asparagine glycosylation occurs at asparagine 301. Residues glutamate 342–serine 352 constitute a propeptide, linker peptide. The N-linked (GlcNAc...) asparagine glycan is linked to asparagine 380. Catalysis depends on residues aspartate 427 and histidine 484.

This sequence belongs to the peptidase S10 family. In terms of assembly, carboxypeptidase II is a dimer, where each monomer is composed of two chains linked by a disulfide bond. In terms of processing, the linker peptide is endoproteolytically excised during enzyme maturation.

The enzyme catalyses Preferential release of a C-terminal arginine or lysine residue.. This chain is Serine carboxypeptidase II-3 (CXP;2-3), found in Hordeum vulgare (Barley).